The following is a 555-amino-acid chain: Oxamate carbamoyltransferase subunit AllF (555 aa).

This sequence belongs to the AllF family. As to quaternary structure, the OXTCase is composed of 3 subunits, AllF, AllG and AllH. The cofactor is Mg(2+).

The catalysed reaction is oxamate + carbamoyl phosphate = N-carbamoyl-2-oxoglycine + phosphate. The protein operates within nitrogen metabolism; (S)-allantoin degradation. Its function is as follows. Component of a carbamoyltransferase involved in the anaerobic nitrogen utilization via the assimilation of allantoin. Catalyzes the conversion of oxalurate (N-carbamoyl-2-oxoglycine) to oxamate and carbamoyl phosphate. This chain is Oxamate carbamoyltransferase subunit AllF, found in Escherichia coli (strain K12).